Here is a 486-residue protein sequence, read N- to C-terminus: Glutamyl-tRNA(Gln) amidotransferase subunit A (486 aa).

Catalysis depends on charge relay system residues Lys78 and Ser153. Catalysis depends on Ser177, which acts as the Acyl-ester intermediate.

This sequence belongs to the amidase family. GatA subfamily. As to quaternary structure, heterotrimer of A, B and C subunits.

The catalysed reaction is L-glutamyl-tRNA(Gln) + L-glutamine + ATP + H2O = L-glutaminyl-tRNA(Gln) + L-glutamate + ADP + phosphate + H(+). Functionally, allows the formation of correctly charged Gln-tRNA(Gln) through the transamidation of misacylated Glu-tRNA(Gln) in organisms which lack glutaminyl-tRNA synthetase. The reaction takes place in the presence of glutamine and ATP through an activated gamma-phospho-Glu-tRNA(Gln). The protein is Glutamyl-tRNA(Gln) amidotransferase subunit A of Syntrophobacter fumaroxidans (strain DSM 10017 / MPOB).